We begin with the raw amino-acid sequence, 444 residues long: Phosphoglucosamine mutase (444 aa).

The active-site Phosphoserine intermediate is Ser-104. Mg(2+) contacts are provided by Ser-104, Asp-243, Asp-245, and Asp-247. Residue Ser-104 is modified to Phosphoserine.

It belongs to the phosphohexose mutase family. The cofactor is Mg(2+). Post-translationally, activated by phosphorylation.

It carries out the reaction alpha-D-glucosamine 1-phosphate = D-glucosamine 6-phosphate. Functionally, catalyzes the conversion of glucosamine-6-phosphate to glucosamine-1-phosphate. This Neisseria meningitidis serogroup B (strain ATCC BAA-335 / MC58) protein is Phosphoglucosamine mutase.